The primary structure comprises 154 residues: Superoxide dismutase [Cu-Zn] (154 aa).

The Cu cation site is built by H47, H49, and H64. A disulfide bridge connects residues C58 and C147. Zn(2+) contacts are provided by H64, H72, H81, and D84. H121 lines the Cu cation pocket. R144 contacts substrate.

The protein belongs to the Cu-Zn superoxide dismutase family. As to quaternary structure, homodimer. Cu cation is required as a cofactor. Requires Zn(2+) as cofactor.

It localises to the cytoplasm. The catalysed reaction is 2 superoxide + 2 H(+) = H2O2 + O2. Its function is as follows. Destroys radicals which are normally produced within the cells and which are toxic to biological systems. This chain is Superoxide dismutase [Cu-Zn] (SOD1), found in Claviceps purpurea (strain 20.1) (Ergot fungus).